A 159-amino-acid polypeptide reads, in one-letter code: 2-C-methyl-D-erythritol 2,4-cyclodiphosphate synthase (159 aa).

The a divalent metal cation site is built by aspartate 8 and histidine 10. 4-CDP-2-C-methyl-D-erythritol 2-phosphate-binding positions include 8-10 (DVH) and 34-35 (HS). An a divalent metal cation-binding site is contributed by histidine 42. Residues 56-58 (DIG), 61-65 (FPDTD), 100-106 (AQAPRML), 132-135 (TTTE), phenylalanine 139, and arginine 142 contribute to the 4-CDP-2-C-methyl-D-erythritol 2-phosphate site.

Belongs to the IspF family. In terms of assembly, homotrimer. The cofactor is a divalent metal cation.

It catalyses the reaction 4-CDP-2-C-methyl-D-erythritol 2-phosphate = 2-C-methyl-D-erythritol 2,4-cyclic diphosphate + CMP. The protein operates within isoprenoid biosynthesis; isopentenyl diphosphate biosynthesis via DXP pathway; isopentenyl diphosphate from 1-deoxy-D-xylulose 5-phosphate: step 4/6. Its function is as follows. Involved in the biosynthesis of isopentenyl diphosphate (IPP) and dimethylallyl diphosphate (DMAPP), two major building blocks of isoprenoid compounds. Catalyzes the conversion of 4-diphosphocytidyl-2-C-methyl-D-erythritol 2-phosphate (CDP-ME2P) to 2-C-methyl-D-erythritol 2,4-cyclodiphosphate (ME-CPP) with a corresponding release of cytidine 5-monophosphate (CMP). In Escherichia coli O6:K15:H31 (strain 536 / UPEC), this protein is 2-C-methyl-D-erythritol 2,4-cyclodiphosphate synthase.